A 925-amino-acid polypeptide reads, in one-letter code: Protein translocase subunit SecA (925 aa).

Residues Gln87, 105–109 (GEGKT), and Asp531 each bind ATP. Residues 867–909 (AAGADMRFQHSQPESVLHKPEAGEGEEAQPFRRETPKVGRNDP) are disordered. Over residues 895–906 (QPFRRETPKVGR) the composition is skewed to basic and acidic residues. Zn(2+) contacts are provided by Cys910, Cys912, Cys921, and His922.

This sequence belongs to the SecA family. As to quaternary structure, monomer and homodimer. Part of the essential Sec protein translocation apparatus which comprises SecA, SecYEG and auxiliary proteins SecDF-YajC and YidC. The cofactor is Zn(2+).

It is found in the cell inner membrane. The protein localises to the cytoplasm. The enzyme catalyses ATP + H2O + cellular proteinSide 1 = ADP + phosphate + cellular proteinSide 2.. Part of the Sec protein translocase complex. Interacts with the SecYEG preprotein conducting channel. Has a central role in coupling the hydrolysis of ATP to the transfer of proteins into and across the cell membrane, serving both as a receptor for the preprotein-SecB complex and as an ATP-driven molecular motor driving the stepwise translocation of polypeptide chains across the membrane. This chain is Protein translocase subunit SecA, found in Thioalkalivibrio sulfidiphilus (strain HL-EbGR7).